The following is a 498-amino-acid chain: tRNA-guanine(15) transglycosylase (498 aa).

The active-site Nucleophile is Asp-85. Position 120 (Asp-120) interacts with substrate. Zn(2+) is bound by residues Cys-275, Cys-277, and Cys-280.

It belongs to the archaeosine tRNA-ribosyltransferase family. It depends on Zn(2+) as a cofactor.

It catalyses the reaction guanosine(15) in tRNA + 7-cyano-7-deazaguanine = 7-cyano-7-carbaguanosine(15) in tRNA + guanine. The protein operates within tRNA modification; archaeosine-tRNA biosynthesis. Exchanges the guanine residue with 7-cyano-7-deazaguanine (preQ0) at position 15 in the dihydrouridine loop (D-loop) of archaeal tRNAs. The polypeptide is tRNA-guanine(15) transglycosylase (Sulfolobus acidocaldarius (strain ATCC 33909 / DSM 639 / JCM 8929 / NBRC 15157 / NCIMB 11770)).